Reading from the N-terminus, the 200-residue chain is Large ribosomal subunit protein uL29 (200 aa).

The interval 1–107 (MTIAKELKQK…KQETKKAEVK (107 aa)) is large ribosomal subunit protein uL29. A disordered region spans residues 92-200 (STKPESKQET…KMIKTKEKKQ (109 aa)). The span at 93–179 (TKPESKQETK…QEVKKVEAKK (87 aa)) shows a compositional bias: basic and acidic residues. Residues 108–200 (PKVESKPESK…KMIKTKEKKQ (93 aa)) form a unknown region. The span at 186 to 200 (KPVKAKMIKTKEKKQ) shows a compositional bias: basic residues.

This sequence belongs to the universal ribosomal protein uL29 family.

This is Large ribosomal subunit protein uL29 from Mycoplasma genitalium (strain ATCC 33530 / DSM 19775 / NCTC 10195 / G37) (Mycoplasmoides genitalium).